Here is a 377-residue protein sequence, read N- to C-terminus: Succinyl-diaminopimelate desuccinylase (377 aa).

Position 68 (His-68) interacts with Zn(2+). The active site involves Asp-70. Position 101 (Asp-101) interacts with Zn(2+). The active-site Proton acceptor is Glu-135. The Zn(2+) site is built by Glu-136, Glu-164, and His-350.

This sequence belongs to the peptidase M20A family. DapE subfamily. In terms of assembly, homodimer. The cofactor is Zn(2+). Requires Co(2+) as cofactor.

It carries out the reaction N-succinyl-(2S,6S)-2,6-diaminopimelate + H2O = (2S,6S)-2,6-diaminopimelate + succinate. The protein operates within amino-acid biosynthesis; L-lysine biosynthesis via DAP pathway; LL-2,6-diaminopimelate from (S)-tetrahydrodipicolinate (succinylase route): step 3/3. Its function is as follows. Catalyzes the hydrolysis of N-succinyl-L,L-diaminopimelic acid (SDAP), forming succinate and LL-2,6-diaminopimelate (DAP), an intermediate involved in the bacterial biosynthesis of lysine and meso-diaminopimelic acid, an essential component of bacterial cell walls. This is Succinyl-diaminopimelate desuccinylase from Aliivibrio fischeri (strain ATCC 700601 / ES114) (Vibrio fischeri).